The following is a 376-amino-acid chain: Glucose-1-phosphate adenylyltransferase (376 aa).

Alpha-D-glucose 1-phosphate-binding positions include Tyr-101, Gly-166, 181–182 (EK), and Ser-192.

It belongs to the bacterial/plant glucose-1-phosphate adenylyltransferase family. As to quaternary structure, homotetramer.

It catalyses the reaction alpha-D-glucose 1-phosphate + ATP + H(+) = ADP-alpha-D-glucose + diphosphate. Its pathway is glycan biosynthesis; glycogen biosynthesis. Its function is as follows. Involved in the biosynthesis of ADP-glucose, a building block required for the elongation reactions to produce glycogen. Catalyzes the reaction between ATP and alpha-D-glucose 1-phosphate (G1P) to produce pyrophosphate and ADP-Glc. The polypeptide is Glucose-1-phosphate adenylyltransferase (Bacillus mycoides (strain KBAB4) (Bacillus weihenstephanensis)).